The sequence spans 476 residues: Aspartyl/glutamyl-tRNA(Asn/Gln) amidotransferase subunit B 1 (476 aa).

Belongs to the GatB/GatE family. GatB subfamily. Heterotrimer of A, B and C subunits.

The enzyme catalyses L-glutamyl-tRNA(Gln) + L-glutamine + ATP + H2O = L-glutaminyl-tRNA(Gln) + L-glutamate + ADP + phosphate + H(+). The catalysed reaction is L-aspartyl-tRNA(Asn) + L-glutamine + ATP + H2O = L-asparaginyl-tRNA(Asn) + L-glutamate + ADP + phosphate + 2 H(+). Its function is as follows. Allows the formation of correctly charged Asn-tRNA(Asn) or Gln-tRNA(Gln) through the transamidation of misacylated Asp-tRNA(Asn) or Glu-tRNA(Gln) in organisms which lack either or both of asparaginyl-tRNA or glutaminyl-tRNA synthetases. The reaction takes place in the presence of glutamine and ATP through an activated phospho-Asp-tRNA(Asn) or phospho-Glu-tRNA(Gln). The chain is Aspartyl/glutamyl-tRNA(Asn/Gln) amidotransferase subunit B 1 (gatB1) from Clostridium acetobutylicum (strain ATCC 824 / DSM 792 / JCM 1419 / IAM 19013 / LMG 5710 / NBRC 13948 / NRRL B-527 / VKM B-1787 / 2291 / W).